The sequence spans 142 residues: Domesticated amidase effector 2 (142 aa).

The signal sequence occupies residues 1-35 (MKLFLISAALVVLGLAAVADAIGCSDPSPFQGRWV). Catalysis depends on residues C43 and H94.

It belongs to the cell wall amidase Dae2/Tae2-like family. In terms of processing, may be post-translationally modified, since the saliva wild-type protein is slightly heavier than the recombinant one. In terms of tissue distribution, detected in salivary glands and in the gut (at protein level).

Its subcellular location is the secreted. Its function is as follows. Tick gut and saliva antibacterial peptide that directly antagonizes host skin commensals which enter the ticks during feeding. Acts as a cell wall hydrolase that cleaves the bond between gamma-D-glutamate-meso-diaminopimelate of a peptide stem and D-alanine of another peptide stem in peptidoglycans. In vitro, degrades peptidoglycans from both Gram-negative and Gram-positive bacteria. Is not able to traverse the protective outer membrane of Gram-negative bacteria. Is not able to kill Borrelia burgdorferi, one of the Lyme disease-causing bacteria. This is Domesticated amidase effector 2 from Ixodes scapularis (Black-legged tick).